Here is a 269-residue protein sequence, read N- to C-terminus: Regulatory protein RecX (269 aa).

Belongs to the RecX family.

The protein resides in the cytoplasm. Its function is as follows. Modulates RecA activity. The sequence is that of Regulatory protein RecX from Listeria monocytogenes serotype 4b (strain CLIP80459).